A 162-amino-acid chain; its full sequence is UPF0114 protein PSPA7_5214 (162 aa).

3 consecutive transmembrane segments (helical) span residues 15-35 (LLAPIYMGLSLALLALTIKFF), 53-73 (LILVLLSLIDMALVGGLLVMV), and 136-156 (LMWYVIIHMTFVLSAFAMGYL).

It belongs to the UPF0114 family.

It is found in the cell membrane. The polypeptide is UPF0114 protein PSPA7_5214 (Pseudomonas paraeruginosa (strain DSM 24068 / PA7) (Pseudomonas aeruginosa (strain PA7))).